A 442-amino-acid polypeptide reads, in one-letter code: Large ribosomal subunit protein mL65 (442 aa).

It belongs to the mitochondrion-specific ribosomal protein mL65 family. Component of the mitochondrial ribosome small subunit (28S) which comprises a 12S rRNA and about 30 distinct proteins.

Its subcellular location is the mitochondrion. The sequence is that of Large ribosomal subunit protein mL65 (Mrps30) from Mus musculus (Mouse).